The sequence spans 387 residues: Galanin receptor type 2 (387 aa).

Residues 1-28 (MNVSGCPGAGNASQAGGGGGWHPEAVIV) are Extracellular-facing. N-linked (GlcNAc...) asparagine glycosylation is found at N2 and N11. Residues 29 to 49 (PLLFALIFLVGTVGNTLVLAV) form a helical membrane-spanning segment. The Cytoplasmic segment spans residues 50 to 60 (LLRGGQAVSTT). The chain crosses the membrane as a helical span at residues 61 to 81 (NLFILNLGVADLCFILCCVPF). The Extracellular segment spans residues 82–99 (QATIYTLDGWVFGSLLCK). Residues C98 and C175 are joined by a disulfide bond. The helical transmembrane segment at 100–121 (AVHFLIFLTMHASSFTLAAVSL) threads the bilayer. Residues 122-141 (DRYLAIRYPLHSRELRTPRN) lie on the Cytoplasmic side of the membrane. The helical transmembrane segment at 142–162 (ALAAIGLIWGLSLLFSGPYLS) threads the bilayer. Over 163–187 (YYRQSQLANLTVCHPAWSAPRRRAM) the chain is Extracellular. The helical transmembrane segment at 188–208 (DICTFVFSYLLPVLVLGLTYA) threads the bilayer. Residues 209 to 237 (RTLRYLWRAVDPVAAGSGARRAKRKVTRM) are Cytoplasmic-facing. The chain crosses the membrane as a helical span at residues 238 to 258 (ILIVAALFCLCWMPHHALILC). The Extracellular portion of the chain corresponds to 259-260 (VW). Residues 261 to 281 (FGQFPLTRATYALRILSHLVS) traverse the membrane as a helical segment. Residues 282–387 (YANSCVNPIV…GDSILTVDVA (106 aa)) lie on the Cytoplasmic side of the membrane.

It belongs to the G-protein coupled receptor 1 family. Expressed abundantly within the central nervous system in both hypothalamus and hippocampus. In peripheral tissues, the strongest expression was observed in heart, kidney, liver, and small intestine.

It is found in the cell membrane. Its function is as follows. Receptor for the hormone galanin and GALP. Receptor for the hormone spexin-1. The activity of this receptor is mediated by G proteins that activate the phospholipase C/protein kinase C pathway (via G(q)) and that inhibit adenylyl cyclase (via G(i)). This Homo sapiens (Human) protein is Galanin receptor type 2 (GALR2).